The primary structure comprises 250 residues: 2-(R)-hydroxypropyl-CoM dehydrogenase (250 aa).

Residues 12-14 (SGN), Asp-33, 60-61 (DV), and Asn-87 contribute to the NAD(+) site. A 2-oxopropyl-coenzyme M-binding site is contributed by Arg-152. Tyr-155 (proton acceptor) is an active-site residue. 188–192 (IETPM) provides a ligand contact to NAD(+). 195–196 (WR) is a binding site for 2-oxopropyl-coenzyme M.

The protein belongs to the short-chain dehydrogenases/reductases (SDR) family. Homodimer in solution. Homotetramer. Component III of the aliphatic epoxide carboxylation complex together with components I, II and IV.

It carries out the reaction (R)-2-hydroxypropyl-coenzyme M + NAD(+) = 2-oxopropyl-coenzyme M + NADH + H(+). The protein operates within alkene metabolism; propylene degradation. With respect to regulation, inhibited by the arginine-specific modifiers 2,3-butanedione and phenylglyoxal. 2-(2-methyl-2-hydroxypropylthio)ethanesulfonate (M-HPC), an achiral analog of both R-HPC and S-HPC, and (2S)-2-hydroxypropyl-coenzyme M (S-HPC) are competitive inhibitors. Inhibited (at 70%) by the coenzyme M analog 2-bromoethanesulfonate (BES). Its function is as follows. Involved in aliphatic epoxide carboxylation. Catalyzes the reversible oxidation of (R)-2-hydroxypropyl-coenzyme M (R-HPC) to 2-oxopropyl-coenzyme M (2-KPC). The enzyme is highly specific for the R enantiomers. In vitro can also use achiral 2-propanol and short-chain (R)- and (S)-2-alkanols. This Xanthobacter autotrophicus (strain ATCC BAA-1158 / Py2) protein is 2-(R)-hydroxypropyl-CoM dehydrogenase.